Here is a 105-residue protein sequence, read N- to C-terminus: Heat shock protein HspQ (105 aa).

It belongs to the HspQ family.

The protein localises to the cytoplasm. Its function is as follows. Involved in the degradation of certain denaturated proteins, including DnaA, during heat shock stress. The chain is Heat shock protein HspQ from Salmonella choleraesuis (strain SC-B67).